The chain runs to 404 residues: Propionate kinase (404 aa).

Belongs to the acetokinase family. PduW subfamily.

The protein localises to the cytoplasm. The catalysed reaction is propanoate + ATP = propanoyl phosphate + ADP. It participates in polyol metabolism; 1,2-propanediol degradation. In terms of biological role, works with phosphate acetyltransferase (pta) to capture exogenous propionate and regenerate propionyl-CoA during degradation of 1,2-propanediol (1,2-PD). Its function is as follows. Expression of a cosmid containing the full 21-gene pdu operon in E.coli allows E.coli to grow on 1,2-propanediol (1,2-PD) with the appearance of bacterial microcompartments (BMC) in its cytoplasm. In Citrobacter freundii, this protein is Propionate kinase.